Here is a 267-residue protein sequence, read N- to C-terminus: 4-hydroxy-tetrahydrodipicolinate reductase (267 aa).

NAD(+) is bound by residues 8–13 (GAGGRM) and glutamate 34. Arginine 35 is a binding site for NADP(+). NAD(+) contacts are provided by residues 98–100 (GTT) and 122–125 (APNM). Histidine 155 (proton donor/acceptor) is an active-site residue. Histidine 156 serves as a coordination point for (S)-2,3,4,5-tetrahydrodipicolinate. The active-site Proton donor is the lysine 159. A (S)-2,3,4,5-tetrahydrodipicolinate-binding site is contributed by 165–166 (GT).

Belongs to the DapB family.

The protein resides in the cytoplasm. The catalysed reaction is (S)-2,3,4,5-tetrahydrodipicolinate + NAD(+) + H2O = (2S,4S)-4-hydroxy-2,3,4,5-tetrahydrodipicolinate + NADH + H(+). The enzyme catalyses (S)-2,3,4,5-tetrahydrodipicolinate + NADP(+) + H2O = (2S,4S)-4-hydroxy-2,3,4,5-tetrahydrodipicolinate + NADPH + H(+). The protein operates within amino-acid biosynthesis; L-lysine biosynthesis via DAP pathway; (S)-tetrahydrodipicolinate from L-aspartate: step 4/4. Its function is as follows. Catalyzes the conversion of 4-hydroxy-tetrahydrodipicolinate (HTPA) to tetrahydrodipicolinate. The sequence is that of 4-hydroxy-tetrahydrodipicolinate reductase from Thioalkalivibrio sulfidiphilus (strain HL-EbGR7).